We begin with the raw amino-acid sequence, 21 residues long: C-phycocyanin alpha subunit (21 aa).

The protein belongs to the phycobiliprotein family. In terms of assembly, heterodimer of an alpha and a beta subunit, which further assembles into trimers and the trimers into hexamers. Post-translationally, contains one covalently linked bilin chromophore.

It localises to the cellular thylakoid membrane. In terms of biological role, light-harvesting photosynthetic bile pigment-protein from the phycobiliprotein complex (phycobilisome, PBS). Phycocyanin is the major phycobiliprotein in the PBS rod. This is C-phycocyanin alpha subunit from Anabaena sp. (strain L31).